Here is a 373-residue protein sequence, read N- to C-terminus: Valienol-1-phosphate guanylyltransferase (373 aa).

Residues Gly177 and 192–193 (EK) each bind substrate.

This sequence belongs to the bacterial/plant glucose-1-phosphate adenylyltransferase family. Mg(2+) serves as cofactor.

The enzyme catalyses valienol 1-phosphate + GTP + H(+) = GDP-valienol + diphosphate. Functionally, involved in the biosynthesis of the antifungal agent validamycin A. Catalyzes the conversion of valienol 1-phosphate to GDP-valienol and less effectively to ADP-valienol or other NDP derivatives. The protein is Valienol-1-phosphate guanylyltransferase of Streptomyces hygroscopicus subsp. limoneus.